Reading from the N-terminus, the 674-residue chain is ATP-dependent DNA helicase Rep (674 aa).

The UvrD-like helicase ATP-binding domain maps to 1–280 (MRLNPGQQHA…IKLEQNYRSS (280 aa)). Residues 22-29 (AGAGSGKT) and arginine 278 contribute to the ATP site. Residues 281–562 (GRILKAANIL…QLMTLHASKG (282 aa)) enclose the UvrD-like helicase C-terminal domain.

This sequence belongs to the helicase family. UvrD subfamily. As to quaternary structure, homodimer.

The enzyme catalyses Couples ATP hydrolysis with the unwinding of duplex DNA by translocating in the 3'-5' direction.. It catalyses the reaction ATP + H2O = ADP + phosphate + H(+). Rep helicase is a single-stranded DNA-dependent ATPase involved in DNA replication; it can initiate unwinding at a nick in the DNA. It binds to the single-stranded DNA and acts in a progressive fashion along the DNA in the 3' to 5' direction. The sequence is that of ATP-dependent DNA helicase Rep from Salmonella typhimurium (strain LT2 / SGSC1412 / ATCC 700720).